The chain runs to 320 residues: Arabinan endo-1,5-alpha-L-arabinosidase C (320 aa).

The signal sequence occupies residues 1 to 15; it reads MKLALSLFLLSGSLA. The active-site Proton acceptor is the Asp-31. 2 N-linked (GlcNAc...) asparagine glycosylation sites follow: Asn-126 and Asn-190. Glu-198 functions as the Proton donor in the catalytic mechanism.

Belongs to the glycosyl hydrolase 43 family.

Its subcellular location is the secreted. It carries out the reaction Endohydrolysis of (1-&gt;5)-alpha-arabinofuranosidic linkages in (1-&gt;5)-arabinans.. It participates in glycan metabolism; L-arabinan degradation. In terms of biological role, endo-1,5-alpha-L-arabinanase involved in degradation of pectin. Its preferred substrate is linear 1,5-alpha-L-arabinan. The polypeptide is Arabinan endo-1,5-alpha-L-arabinosidase C (abnC) (Emericella nidulans (strain FGSC A4 / ATCC 38163 / CBS 112.46 / NRRL 194 / M139) (Aspergillus nidulans)).